Here is a 414-residue protein sequence, read N- to C-terminus: Tryptophan synthase beta chain (414 aa).

Lysine 109 bears the N6-(pyridoxal phosphate)lysine mark.

It belongs to the TrpB family. Tetramer of two alpha and two beta chains. It depends on pyridoxal 5'-phosphate as a cofactor.

The catalysed reaction is (1S,2R)-1-C-(indol-3-yl)glycerol 3-phosphate + L-serine = D-glyceraldehyde 3-phosphate + L-tryptophan + H2O. It participates in amino-acid biosynthesis; L-tryptophan biosynthesis; L-tryptophan from chorismate: step 5/5. Functionally, the beta subunit is responsible for the synthesis of L-tryptophan from indole and L-serine. The sequence is that of Tryptophan synthase beta chain from Prochlorococcus marinus (strain AS9601).